We begin with the raw amino-acid sequence, 335 residues long: Glyceraldehyde-3-phosphate dehydrogenase (335 aa).

Residues 12–13 (RI), D34, R78, and S120 contribute to the NAD(+) site. D-glyceraldehyde 3-phosphate is bound by residues 151–153 (SCT) and T182. The active-site Nucleophile is C152. N183 lines the NAD(+) pocket. D-glyceraldehyde 3-phosphate is bound by residues R197, 210–211 (TG), and R233. Position 315 (N315) interacts with NAD(+).

Belongs to the glyceraldehyde-3-phosphate dehydrogenase family. Homotetramer.

The protein resides in the cytoplasm. It carries out the reaction D-glyceraldehyde 3-phosphate + phosphate + NAD(+) = (2R)-3-phospho-glyceroyl phosphate + NADH + H(+). The protein operates within carbohydrate degradation; glycolysis; pyruvate from D-glyceraldehyde 3-phosphate: step 1/5. Functionally, catalyzes the oxidative phosphorylation of glyceraldehyde 3-phosphate (G3P) to 1,3-bisphosphoglycerate (BPG) using the cofactor NAD. The first reaction step involves the formation of a hemiacetal intermediate between G3P and a cysteine residue, and this hemiacetal intermediate is then oxidized to a thioester, with concomitant reduction of NAD to NADH. The reduced NADH is then exchanged with the second NAD, and the thioester is attacked by a nucleophilic inorganic phosphate to produce BPG. This chain is Glyceraldehyde-3-phosphate dehydrogenase (gap), found in Priestia megaterium (strain DSM 319 / IMG 1521) (Bacillus megaterium).